Consider the following 637-residue polypeptide: MAKIIKLDDHLSNKIAAGEVVERPASVVKELVENALDANSRKITIEVEAGGLDRIRVIDDGDGIEREDVETAFFRHATSKIKTDKDLFQIATLGFRGEALPSIASVSHVQIKTSTGGDGGTEMVLEGGVIKKIGSTAMGKGTDLTVTQLFYNTPARLKYVKTVHTELGNISDVVNRLALAHPYVSFQLFHNGKNVLRTSGNGDQLQVIAAIYGRTVAKQMVPLSGETIDFTVSGFAAKPEVTRASRQYMSLLVNGRYIRNVALSKAIQQGFHTLLPIGRYPIAIVNIELDPQLIDVNVHPSKLEVRVSKEEELCRLVTETIERAFKKEQLIPEATKPTGGKQKSEQLSFTLDDFTSAKPSEDRGSTSSNEENEQRSSIDKNVLFQEERKLSNDLPSINMVREASASVEPALEKEPPAAELTAGAKGAMEQASMEEETSNSLPANRVPTMYPIGQMHGTYILAQNDQGLYIIDQHAAQERMKYEYFREKVGEVTNELQELIVPITVECTLQEAAYIEEHLEDLKQVGLFFEEFGPQTFMIRQHPTWFPKGLEEETIREMIDQLMEKRKVDIKKLREEVAILMSCKAAIKANRHLRHDEMYALLEALRKSSDPFTCPHGRPIIVQITTYEMEKMFKRVM.

Disordered regions lie at residues 352–384 (DDFT…NVLF) and 405–430 (ASVE…AMEQ).

It belongs to the DNA mismatch repair MutL/HexB family.

This protein is involved in the repair of mismatches in DNA. It is required for dam-dependent methyl-directed DNA mismatch repair. May act as a 'molecular matchmaker', a protein that promotes the formation of a stable complex between two or more DNA-binding proteins in an ATP-dependent manner without itself being part of a final effector complex. In Halalkalibacterium halodurans (strain ATCC BAA-125 / DSM 18197 / FERM 7344 / JCM 9153 / C-125) (Bacillus halodurans), this protein is DNA mismatch repair protein MutL.